Here is a 105-residue protein sequence, read N- to C-terminus: UPF0145 protein OEOE_0637 (105 aa).

Belongs to the UPF0145 family.

In Oenococcus oeni (strain ATCC BAA-331 / PSU-1), this protein is UPF0145 protein OEOE_0637.